The chain runs to 793 residues: Flavin carrier protein 1 (793 aa).

Positions 1–21 are cleaved as a signal peptide; it reads MQVLVTLWCLICTCLVLPVAA. Residues 22–163 are Lumenal-facing; it reads KKRTLTASSL…FFSNGKTVSQ (142 aa). N143 carries an N-linked (GlcNAc...) asparagine glycan. Residues 164-184 traverse the membrane as a helical segment; that stretch reads IGVKWVTAVIAGIGLLTSAVL. Over 185-194 the chain is Cytoplasmic; it reads STFGNSTAAS. A helical membrane pass occupies residues 195 to 215; that stretch reads HISANTMSLFLYFQSVAVVAM. Topologically, residues 216–223 are lumenal; the sequence is QHVDSVPP. Residues 224–244 form a helical membrane-spanning segment; that stretch reads IAAAWSENLAWSMGLIRITFM. Over 245-249 the chain is Cytoplasmic; sequence QKIFR. A helical transmembrane segment spans residues 250-272; the sequence is WYVEATGGSASLYLTATTMSVLT. The Lumenal portion of the chain corresponds to 273 to 317; it reads QRGLDYLKNTSVYKRAENVLYGNSNTLIFRGIKRMGYRMKIENTA. N281 carries an N-linked (GlcNAc...) asparagine glycan. Residues 318 to 338 traverse the membrane as a helical segment; the sequence is IVCTGFTFFVLCGYFLAGFIM. Over 339-372 the chain is Cytoplasmic; sequence ACKYSIELCIRCGWMRSDRFYQFRKNWRSVLKGS. The helical transmembrane segment at 373–393 threads the bilayer; the sequence is LLRYIYIGFTQLTILSFWEFT. Residues 394-397 are Lumenal-facing; that stretch reads ERDS. The chain crosses the membrane as a helical span at residues 398-418; that stretch reads AGVIVIACLFIVLSCGLMAWA. Residues 419 to 461 are Cytoplasmic-facing; the sequence is AYRTIFFASKSVEMYNNPAALLYGDEYVLNKYGFFYTMFNAKH. Residues 462–482 form a helical membrane-spanning segment; it reads YWWNALLTTYILVKALFVGFA. The Lumenal portion of the chain corresponds to 483–484; the sequence is QA. Residues 485–505 traverse the membrane as a helical segment; sequence SGKTQALAIFIIDLAYFVAII. Residues 506-516 lie on the Cytoplasmic side of the membrane; the sequence is RYKPYLDRPTN. A helical transmembrane segment spans residues 517–537; sequence IVNIFICTVTLVNSFLFMFFS. Residues 538–551 are Lumenal-facing; the sequence is NLFNQKYAVSAIMG. The chain crosses the membrane as a helical span at residues 552 to 572; that stretch reads WVFFIMNAAFSLLLLLMILAF. Residues 573–793 lie on the Cytoplasmic side of the membrane; sequence TTIILFSKNP…KANILDPDYL (221 aa). Position 610 is a phosphoserine (S610). T626 is modified (phosphothreonine). Disordered stretches follow at residues 649-674 and 689-731; these read YDDEKTGTNSENAESSSKETTRPTFS and KLGS…QESE. Positions 701–719 are enriched in polar residues; sequence ITQQEVSPDRASSSPNSKS. Phosphoserine is present on residues S771 and S774.

It belongs to the transient receptor potential (TRP) ion channel family.

The protein resides in the endoplasmic reticulum membrane. May be responsible for the transport of FAD into the endoplasmic reticulum lumen, where it is required for oxidative protein folding. The polypeptide is Flavin carrier protein 1 (FLC1) (Saccharomyces cerevisiae (strain ATCC 204508 / S288c) (Baker's yeast)).